The primary structure comprises 275 residues: MVVLLCLCVLLWEEAHGWGFKNGIFHNSIWLEQAAGVYHREARAGRYKLTYAEAKAVCEFEGGRLATYKQLEAARKIGFHVCAAGWMAKGRVGYPIVKPGPNCGFGKTGIIDYGIRLNRSERWDAYCYNPHAKECGGVFTDPKRIFKSPGFPNEYDDNQVCYWHIRLKYGQRIHLSFLDFDLEHDPGCLADYVEIYDSYDDVHGFVGRYCGDELPEDIISTGNVMTLKFLSDASVTAGGFQIKYVTVDPASKSSQAKNTSTTGNKKFLPGRFSHL.

Positions 1-17 (MVVLLCLCVLLWEEAHG) are cleaved as a signal peptide. A Link domain is found at 36–129 (GVYHREARAG…SERWDAYCYN (94 aa)). 3 disulfides stabilise this stretch: Cys-58–Cys-127, Cys-82–Cys-103, and Cys-135–Cys-161. N-linked (GlcNAc...) asparagine glycosylation is present at Asn-118. In terms of domain architecture, CUB spans 135–247 (CGGVFTDPKR…GGFQIKYVTV (113 aa)). 5 residues coordinate Ca(2+): Glu-183, Asp-191, Asp-232, Ser-234, and Val-235. Cysteines 188 and 210 form a disulfide. Positions 253-264 (SSQAKNTSTTGN) are enriched in polar residues. The disordered stretch occupies residues 253–275 (SSQAKNTSTTGNKKFLPGRFSHL). N-linked (GlcNAc...) asparagine glycosylation is present at Asn-258.

In terms of assembly, interacts (via Link domain) with inter-alpha-inhibitor (I-alpha-I) component bikunin. Interacts with ITIH2/HC2; this interaction is required for transesterification of the HC to hyaluronan. Interacts (via Link and CUB domains) with ITIH1. Chondroitin sulfate may be required for the stability of the complex. Interacts (via Link domain) with various C-X-C and C-C chemokines including PF4, CXCL8, CXCL11, CXCL12, CCL2, CCL7, CCL19, CCL21, and CCL27; this interaction interferes with chemokine binding to glycosaminoglycans. Interacts (primarily via Link domain) with BMP2; this interaction is inhibited by hyaluronan. Interacts (via both Link and CUB domains) with TNFSF11. Interacts (via CUB domain) with FN1 (via type III repeats 9-14); this interaction enhances fibronectin fibril assembly. TNFAIP6 may act as a bridging molecule between FN1 and THBS1. In terms of tissue distribution, expressed in epiphyseal and metaphyseal bone marrow of both the femur and tibia (at protein level).

The protein localises to the secreted. Major regulator of extracellular matrix organization during tissue remodeling. Catalyzes the transfer of a heavy chain (HC) from inter-alpha-inhibitor (I-alpha-I) complex to hyaluronan. Cleaves the ester bond between the C-terminus of the HC and GalNAc residue of the chondroitin sulfate chain in I-alpha-I complex followed by transesterification of the HC to hyaluronan. In the process, potentiates the antiprotease function of I-alpha-I complex through release of free bikunin. Acts as a catalyst in the formation of hyaluronan-HC oligomers and hyaluronan-rich matrix surrounding the cumulus cell-oocyte complex, a necessary step for oocyte fertilization. Assembles hyaluronan in pericellular matrices that serve as platforms for receptor clustering and signaling. Enables binding of hyaluronan deposited on the surface of macrophages to LYVE1 on lymphatic endothelium and facilitates macrophage extravasation. Alters hyaluronan binding to functionally latent CD44 on vascular endothelium, switching CD44 into an active state that supports leukocyte rolling. Modulates the interaction of chemokines with extracellular matrix components and proteoglycans on endothelial cell surface, likely preventing chemokine gradient formation. In a negative feedback mechanism, may limit excessive neutrophil recruitment at inflammatory sites by antagonizing the association of CXCL8 with glycosaminoglycans on vascular endothelium. Has a role in osteogenesis and bone remodeling. Inhibits BMP2-dependent differentiation of mesenchymal stem cell to osteoblasts. Protects against bone erosion during inflammation by inhibiting TNFSF11/RANKL-dependent osteoclast activation. The sequence is that of Tumor necrosis factor-inducible gene 6 protein (Tnfaip6) from Mus musculus (Mouse).